The chain runs to 466 residues: 3-isopropylmalate dehydratase large subunit (466 aa).

Residues cysteine 347, cysteine 407, and cysteine 410 each coordinate [4Fe-4S] cluster.

This sequence belongs to the aconitase/IPM isomerase family. LeuC type 1 subfamily. Heterodimer of LeuC and LeuD. [4Fe-4S] cluster is required as a cofactor.

The catalysed reaction is (2R,3S)-3-isopropylmalate = (2S)-2-isopropylmalate. It participates in amino-acid biosynthesis; L-leucine biosynthesis; L-leucine from 3-methyl-2-oxobutanoate: step 2/4. Catalyzes the isomerization between 2-isopropylmalate and 3-isopropylmalate, via the formation of 2-isopropylmaleate. The protein is 3-isopropylmalate dehydratase large subunit of Shigella sonnei (strain Ss046).